We begin with the raw amino-acid sequence, 339 residues long: Phenylalanine--tRNA ligase alpha subunit (339 aa).

Glu254 contacts Mg(2+).

This sequence belongs to the class-II aminoacyl-tRNA synthetase family. Phe-tRNA synthetase alpha subunit type 1 subfamily. As to quaternary structure, tetramer of two alpha and two beta subunits. Mg(2+) serves as cofactor.

It localises to the cytoplasm. It carries out the reaction tRNA(Phe) + L-phenylalanine + ATP = L-phenylalanyl-tRNA(Phe) + AMP + diphosphate + H(+). In Chlamydia pneumoniae (Chlamydophila pneumoniae), this protein is Phenylalanine--tRNA ligase alpha subunit (pheS).